The primary structure comprises 992 residues: Tubulin glycylase 3A (992 aa).

2 disordered regions span residues 1–54 (MQTR…NRVV) and 68–113 (QSDS…LGAP). Over residues 7-26 (SEPHRSRDQVTDGDRNRDQP) the composition is skewed to basic and acidic residues. Residues 39 to 49 (VTPPAAPPPTP) show a composition bias toward pro residues. The TTL domain maps to 295–645 (FKLTACVAFL…RRTDPKAELG (351 aa)). ATP is bound by residues 457-460 (QKYI), lysine 470, and aspartate 472. Disordered regions lie at residues 746-766 (SLCS…TATP) and 791-828 (KRNT…PVES). Residues 794–807 (TGGSLSGEQVQSTA) show a composition bias toward polar residues.

The protein localises to the cytoplasm. It is found in the cytoskeleton. Polylycylase which modifies alpha- and beta-tubulin, generating side chains of glycine on the gamma-carboxyl groups of specific glutamate residues within the C-terminal tail of alpha- and beta-tubulin. Involved both in the side-chain initiation and elongation steps of the polyglycylation reaction by adding a single glycine chain to generate monoglycine side chains and by elongating monoglycine side chains to polyglycine side chains. The chain is Tubulin glycylase 3A (TTLL3A) from Drosophila melanogaster (Fruit fly).